The sequence spans 289 residues: MSSAPVELRDCPAPAKLNLFLHVVGRRPDGYHLLQTVFQLIDWSDTLHFARRPDRRLVRTTDILGVPADDDLVIRAARLLQAETGCTYGVDIAIEKRLPMGGGLGGGSSDAATTLLALNRLWGLDLPRAQLMKIGLKLGADVPFFVFGQNAFAEGIGEKLTPITLPPAAFVVIHPRVHVPTPAIFSDEGLTRDTPLTIITDFPDQQIVFAYGRNDLQAVAERKYGEIARALVWLRQFSPLARMTGSGACVFAPFDNVEHAQAVADQVPSEWEGRCAAGLTHHPLARFAV.

The active site involves Lys16. An ATP-binding site is contributed by 99–109 (PMGGGLGGGSS). The active site involves Asp141.

The protein belongs to the GHMP kinase family. IspE subfamily.

It catalyses the reaction 4-CDP-2-C-methyl-D-erythritol + ATP = 4-CDP-2-C-methyl-D-erythritol 2-phosphate + ADP + H(+). It participates in isoprenoid biosynthesis; isopentenyl diphosphate biosynthesis via DXP pathway; isopentenyl diphosphate from 1-deoxy-D-xylulose 5-phosphate: step 3/6. Functionally, catalyzes the phosphorylation of the position 2 hydroxy group of 4-diphosphocytidyl-2C-methyl-D-erythritol. In Ralstonia pickettii (strain 12J), this protein is 4-diphosphocytidyl-2-C-methyl-D-erythritol kinase.